The primary structure comprises 116 residues: Phage-like element PBSX protein XkdD (116 aa).

The polypeptide is Phage-like element PBSX protein XkdD (xkdD) (Bacillus subtilis (strain 168)).